A 670-amino-acid chain; its full sequence is DNA ligase (670 aa).

NAD(+)-binding positions include 34–38 (DAEYD), 84–85 (SL), 116–119 (EHKV), Arg139, Glu174, Tyr226, Lys291, and Lys315. Lys118 serves as the catalytic N6-AMP-lysine intermediate. Zn(2+) is bound by residues Cys409, Cys412, Cys425, and Cys430. Residues 586 to 670 (EVSDLLSGLT…LKEKGAPVPA (85 aa)) enclose the BRCT domain.

It belongs to the NAD-dependent DNA ligase family. LigA subfamily. The cofactor is Mg(2+).

It carries out the reaction NAD(+) + (deoxyribonucleotide)n-3'-hydroxyl + 5'-phospho-(deoxyribonucleotide)m = (deoxyribonucleotide)n+m + AMP + beta-nicotinamide D-nucleotide.. Functionally, DNA ligase that catalyzes the formation of phosphodiester linkages between 5'-phosphoryl and 3'-hydroxyl groups in double-stranded DNA using NAD as a coenzyme and as the energy source for the reaction. It is essential for DNA replication and repair of damaged DNA. In Thermus filiformis, this protein is DNA ligase.